The following is a 196-amino-acid chain: Cilia- and flagella-associated protein 107 (196 aa).

2 mn regions span residues 46 to 61 (TPQT…FPGH) and 96 to 108 (ISTY…RHNY). The interval 168–196 (YPRPPAGAMSRREHAIPVPPPRLQPVPHF) is disordered. Positions 184 to 196 (PVPPPRLQPVPHF) are enriched in pro residues.

As to quaternary structure, microtubule inner protein component of sperm flagellar doublet microtubules. In terms of tissue distribution, expressed in trachea multiciliated cells.

Its subcellular location is the cytoplasm. The protein localises to the cytoskeleton. It localises to the cilium axoneme. It is found in the flagellum axoneme. Microtubule inner protein (MIP) part of the dynein-decorated doublet microtubules (DMTs) in cilia axoneme, which is required for motile cilia beating. The protein is Cilia- and flagella-associated protein 107 of Bos taurus (Bovine).